The sequence spans 130 residues: DNA-directed RNA polymerase subunit omega (130 aa).

The tract at residues 109–130 (EEELLKGLEGLAPPEEQPEEDE) is disordered.

This sequence belongs to the RNA polymerase subunit omega family. The RNAP catalytic core consists of 2 alpha, 1 beta, 1 beta' and 1 omega subunit. When a sigma factor is associated with the core the holoenzyme is formed, which can initiate transcription.

The catalysed reaction is RNA(n) + a ribonucleoside 5'-triphosphate = RNA(n+1) + diphosphate. In terms of biological role, promotes RNA polymerase assembly. Latches the N- and C-terminal regions of the beta' subunit thereby facilitating its interaction with the beta and alpha subunits. The sequence is that of DNA-directed RNA polymerase subunit omega from Rhodopseudomonas palustris (strain BisB5).